A 329-amino-acid chain; its full sequence is Quinolinate synthase (329 aa).

Residues His-44 and Ser-61 each coordinate iminosuccinate. Cys-106 lines the [4Fe-4S] cluster pocket. Iminosuccinate is bound by residues 132-134 (YIN) and Ser-149. Residue Cys-192 coordinates [4Fe-4S] cluster. Iminosuccinate contacts are provided by residues 218–220 (HPE) and Thr-235. Cys-285 contacts [4Fe-4S] cluster.

Belongs to the quinolinate synthase family. Type 2 subfamily. Requires [4Fe-4S] cluster as cofactor.

Its subcellular location is the plastid. It localises to the cyanelle. It catalyses the reaction iminosuccinate + dihydroxyacetone phosphate = quinolinate + phosphate + 2 H2O + H(+). It participates in cofactor biosynthesis; NAD(+) biosynthesis; quinolinate from iminoaspartate: step 1/1. Functionally, catalyzes the condensation of iminoaspartate with dihydroxyacetone phosphate to form quinolinate. This Cyanophora paradoxa protein is Quinolinate synthase.